Here is a 185-residue protein sequence, read N- to C-terminus: Prenylated Rab acceptor protein 1 (185 aa).

Residues 1–78 (MAVEKDQQKD…RNVEYYQSNY (78 aa)) are Cytoplasmic-facing. Residues 30-54 (AGREWLERRRATIRSWGSFVDQRRF) are required for interaction with prenylated RAB3A and VAMP2. Helical transmembrane passes span 79–94 (VFVF…ATSP) and 95–112 (MLLV…ILYL). The Cytoplasmic portion of the chain corresponds to 113 to 131 (RTLQSKFVLFGREVSPAHQ). The next 2 helical transmembrane spans lie at 132 to 148 (YALA…LAGA) and 149 to 165 (GSAV…VIGS). Positions 165 to 185 (SHAAFHQIEAVDGEELQMEPV) are required for interaction with GDI1. The Cytoplasmic portion of the chain corresponds to 166–185 (HAAFHQIEAVDGEELQMEPV). The segment at 175-185 (VDGEELQMEPV) is required for interaction with prenylated RAB3A and VAMP2. The homodimerization stretch occupies residues 175-185 (VDGEELQMEPV).

This sequence belongs to the PRA1 family. As to quaternary structure, homodimer. Interacts with VAMP2 (synaptobrevin-2), prenylated Rab proteins, GDI1, NDRG1 and PCLO.

Its subcellular location is the cell membrane. The protein localises to the cytoplasm. It is found in the golgi apparatus. It localises to the cytoplasmic vesicle. The protein resides in the secretory vesicle. Its subcellular location is the synaptic vesicle. In terms of biological role, general Rab protein regulator required for vesicle formation from the Golgi complex. May control vesicle docking and fusion by mediating the action of Rab GTPases to the SNARE complexes. In addition it inhibits the removal of Rab GTPases from the membrane by GDI1. The protein is Prenylated Rab acceptor protein 1 (RABAC1) of Bos taurus (Bovine).